The following is a 605-amino-acid chain: Elongation factor 4 (605 aa).

A tr-type G domain is found at 10–192 (KNIRNFAIVA…AIVMRLPPPH (183 aa)). Residues 22–27 (DHGKST) and 139–142 (NKVD) contribute to the GTP site.

This sequence belongs to the TRAFAC class translation factor GTPase superfamily. Classic translation factor GTPase family. LepA subfamily.

It localises to the cell inner membrane. It carries out the reaction GTP + H2O = GDP + phosphate + H(+). Functionally, required for accurate and efficient protein synthesis under certain stress conditions. May act as a fidelity factor of the translation reaction, by catalyzing a one-codon backward translocation of tRNAs on improperly translocated ribosomes. Back-translocation proceeds from a post-translocation (POST) complex to a pre-translocation (PRE) complex, thus giving elongation factor G a second chance to translocate the tRNAs correctly. Binds to ribosomes in a GTP-dependent manner. The protein is Elongation factor 4 of Chelativorans sp. (strain BNC1).